Consider the following 401-residue polypeptide: Probable trafficking protein particle complex subunit 13 homolog (401 aa).

Belongs to the TRAPPC13 family.

The polypeptide is Probable trafficking protein particle complex subunit 13 homolog (Caenorhabditis briggsae).